The primary structure comprises 297 residues: Sirohydrochlorin cobaltochelatase CbiKP (297 aa).

The first 28 residues, 1-28 (MSRHPMVTRLLCLVFSCLIILACSPAFA), serve as a signal peptide directing secretion. Position 124 (His124) interacts with heme. The Proton acceptor role is filled by His182. His182, Glu212, and His244 together coordinate Co(2+).

The protein belongs to the CbiK family. As to quaternary structure, homotetramer; dimer of dimers.

The protein localises to the periplasm. The enzyme catalyses Co-sirohydrochlorin + 2 H(+) = sirohydrochlorin + Co(2+). The catalysed reaction is siroheme + 2 H(+) = sirohydrochlorin + Fe(2+). In terms of biological role, catalyzes the insertion of Co(2+) into sirohydrochlorin. To a lesser extent, is also able to insert Fe(2+) into sirohydrochlorin, yielding siroheme. Its periplasmic location means that it cannot participate in cobalamin biosynthesis and its genomic environment suggests it is likely to be associated with a heme or metal transport system. The chain is Sirohydrochlorin cobaltochelatase CbiKP (cbiKp) from Nitratidesulfovibrio vulgaris (strain ATCC 29579 / DSM 644 / CCUG 34227 / NCIMB 8303 / VKM B-1760 / Hildenborough) (Desulfovibrio vulgaris).